The chain runs to 3179 residues: Guanylate cyclase beta (3179 aa).

Residues 1–60 are Cytoplasmic-facing; that stretch reads MKTQTLSLMNINGKRKFLGTNNKIYRKVIINPTSEDDIQKFCRNYFRIYNFSLYNFIRRL. Residues 61–81 traverse the membrane as a helical segment; that stretch reads ISFDAILVYSLFLTVYIFSEI. At 82–88 the chain is on the extracellular side; it reads NHGETKK. The chain crosses the membrane as a helical span at residues 89-109; sequence YLFIDTAISLFFNIILLIVIE. Residues 110–295 are Cytoplasmic-facing; that stretch reads SLFELKKLKD…FCIKMNNIVY (186 aa). The helical transmembrane segment at 296–316 threads the bilayer; that stretch reads YLIFMYFVFVVLSIVIKTIFF. The Extracellular portion of the chain corresponds to 317 to 328; it reads HKKNSFQNSRDS. A helical transmembrane segment spans residues 329-349; it reads FLSMLEDFVGLYILVLPIMMY. Topologically, residues 350–988 are cytoplasmic; sequence SEKSLIYIIQ…GRLNRFSLCK (639 aa). Residues 989 to 1009 form a helical membrane-spanning segment; it reads VFLWIIYLKITVVSFYFFHNF. The Extracellular portion of the chain corresponds to 1010–1020; it reads DNYFSGSSASS. A helical membrane pass occupies residues 1021–1041; sequence ILYTQTTFALLHYFLIIAFSA. The Cytoplasmic portion of the chain corresponds to 1042 to 1069; that stretch reads YEIDLPYKFVRRLPYIYQLSRRKYFLNN. A helical membrane pass occupies residues 1070 to 1090; it reads NIILLTIIEAILISLTSYYIL. Residues 1091 to 1102 lie on the Extracellular side of the membrane; that stretch reads RLNVFHLITHRE. A helical transmembrane segment spans residues 1103–1123; that stretch reads FTFHIFILNVFITTEKILLLS. Topologically, residues 1124–1127 are cytoplasmic; sequence KTWH. The chain crosses the membrane as a helical span at residues 1128 to 1148; the sequence is IYFFIMAVLIIGILLIYVNIF. At 1149–1168 the chain is on the extracellular side; it reads TLVDCIKNGKCEFSLFQMEN. Residues 1169–1189 form a helical membrane-spanning segment; that stretch reads IYFWTSLFPILYINFIFDKLM. Residues 1190 to 1304 are Cytoplasmic-facing; that stretch reads KYIKNRIYPD…YEKGNKLKLR (115 aa). Residues 1305 to 1325 form a helical membrane-spanning segment; sequence IIVILLFLIYIIIFSSQTIID. Over 1326–1331 the chain is Extracellular; that stretch reads INTKSN. A helical transmembrane segment spans residues 1332-1352; the sequence is IHYITMFYIIYFVLACVLLIY. At 1353–1360 the chain is on the cytoplasmic side; it reads IRIRNKAT. Residues 1361–1381 form a helical membrane-spanning segment; that stretch reads STFFFFLSRFLLICGFCIELY. The Extracellular segment spans residues 1382–1401; that stretch reads DNISNDILNVLITYSFTVSY. The N-linked (GlcNAc...) asparagine glycan is linked to Asn-1383. The chain crosses the membrane as a helical span at residues 1402 to 1422; sequence IFFMSFKILEALLVCISILLL. Residues 1423–1464 lie on the Cytoplasmic side of the membrane; sequence TFGVYYEKNKNMIDICTHFCSNPYLSINNLDHMNISCLCKKQ. A helical transmembrane segment spans residues 1465–1485; the sequence is IVIFLISLLSFTLICLSMKYY. At 1486–1507 the chain is on the extracellular side; the sequence is EIFYLKKKFLFRYKQKVNLAKQ. Residues 1508-1528 form a helical membrane-spanning segment; it reads IEILHTMLPNFLVEYLLISDP. The Cytoplasmic segment spans residues 1529–2739; the sequence is KNDGIMVGKN…IINIDLTKKL (1211 aa). In terms of domain architecture, Guanylate cyclase 1 spans 1548 to 1700; the sequence is SVIFCDIDDF…DTVNTASRMK (153 aa). Disordered stretches follow at residues 2123-2153, 2355-2379, and 2576-2656; these read LHNY…YTSS, SINK…KDKK, and KDSD…HHHS. A compositionally biased stretch (basic residues) spans 2131–2142; sequence NKNKNKKNNKNV. Residues 2584–2607 show a composition bias toward low complexity; that stretch reads NNNKISKNRYNNNNNNNNSNYSNI. Basic residues predominate over residues 2614–2645; the sequence is HNNKKNHHHNNNKYHHHNNNKYHHHNNNKYHH. Residues 2740–2760 form a helical membrane-spanning segment; it reads IIIFIFTEIFLSLCNIIELSF. Over 2761–2770 the chain is Extracellular; the sequence is YEKKLRYNDS. A glycan (N-linked (GlcNAc...) asparagine) is linked at Asn-2768. Residues 2771–2791 form a helical membrane-spanning segment; the sequence is IVIIWLIRSIYLFIITYIWII. Over 2792-2809 the chain is Cytoplasmic; that stretch reads LKTKLKEYKNNSSKMMWT. The helical transmembrane segment at 2810 to 2830 threads the bilayer; it reads IFILNIFLCSWGIILIDLSCI. The Extracellular portion of the chain corresponds to 2831–2842; it reads HYSMLLGNKNER. Residues 2843-2863 traverse the membrane as a helical segment; sequence ALFFMKDASELIICIQLIFIK. At 2864 to 2870 the chain is on the cytoplasmic side; it reads NMLFKHK. A helical membrane pass occupies residues 2871 to 2891; it reads FFFFVFFYIFLIYSFSKLFSI. Residues 2892-2895 lie on the Extracellular side of the membrane; that stretch reads HTCQ. The chain crosses the membrane as a helical span at residues 2896-2916; that stretch reads THICCSIILFISINILYFWYS. Residues 2917–3179 are Cytoplasmic-facing; it reads EYLDRIQFLV…KLRQKKGLRS (263 aa). The Guanylate cyclase 2 domain maps to 2968–3102; sequence AFLFADIVGF…LDVLIANKIE (135 aa). Positions 2973, 2974, and 3017 each coordinate Mg(2+).

The protein in the N-terminal section; belongs to the cation transport ATPase (P-type) (TC 3.A.3) family. Type IV subfamily. In the C-terminal section; belongs to the adenylyl cyclase class-4/guanylyl cyclase family. It depends on Mg(2+) as a cofactor. Mn(2+) is required as a cofactor.

It is found in the membrane. The catalysed reaction is GTP = 3',5'-cyclic GMP + diphosphate. With respect to regulation, basal guanylate activity of the recombinant guanylate cyclase domains 1 and 2 is not modulated by an increase in Ca(2+) levels or by the gametogenesis inducer xanthurenic acid. Its function is as follows. Catalyzes the synthesis of the second messenger cGMP from GTP. Regulates cGMP production in gametocytes; however, is dispensable for the initiation of gametogenesis. Does not have adenylate cyclase activity. The sequence is that of Guanylate cyclase beta from Plasmodium falciparum (isolate 3D7).